Consider the following 270-residue polypeptide: Interleukin-33 (270 aa).

The tract at residues 1–65 (MKPKMKYSTN…EACYFRRETT (65 aa)) is homeodomain-like HTH domain. A propeptide spanning residues 1 to 94 (MKPKMKYSTN…CQQQSTVESF (94 aa)) is cleaved from the precursor. An interaction with RELA region spans residues 64 to 111 (TTKRPSLKTDRKHKRHLVLAACQQQSTVESFAFGISGVQKYTRALHDS).

It belongs to the IL-1 family. Highly divergent. As to quaternary structure, forms a 1:1:1 heterotrimeric complex with its primary high-affinity receptor IL1RL1 and the coreceptor IL1RAP. Interacts with cargo receptor TMED10; the interaction mediates the translocation from the cytoplasm into the ERGIC (endoplasmic reticulum-Golgi intermediate compartment) and thereby secretion. Post-translationally, the full-length protein can be released from cells and is able to signal via the IL1RL1/ST2 receptor. However, proteolytic processing by CELA1, CSTG/cathepsin G and ELANE/neutrophil elastase produces C-terminal peptides that are more active than the unprocessed full-length protein. May also be proteolytically processed by calpains. Proteolytic cleavage mediated by apoptotic caspases including CASP3 and CASP7 results in IL33 inactivation. In vitro proteolytic cleavage by CASP1 was reported but could not be confirmed in vivo suggesting that IL33 is probably not a direct substrate for that caspase.

The protein localises to the nucleus. It is found in the chromosome. It localises to the cytoplasm. The protein resides in the cytoplasmic vesicle. Its subcellular location is the secretory vesicle. The protein localises to the secreted. Its function is as follows. Cytokine that binds to and signals through the IL1RL1/ST2 receptor which in turn activates NF-kappa-B and MAPK signaling pathways in target cells. Involved in the maturation of Th2 cells inducing the secretion of T-helper type 2-associated cytokines. Also involved in activation of mast cells, basophils, eosinophils and natural killer cells. Acts as a chemoattractant for Th2 cells, and may function as an 'alarmin', that amplifies immune responses during tissue injury. Induces rapid UCP2-dependent mitochondrial rewiring that attenuates the generation of reactive oxygen species and preserves the integrity of Krebs cycle required for persistent production of itaconate and subsequent GATA3-dependent differentiation of inflammation-resolving alternatively activated macrophages. In terms of biological role, in quiescent endothelia the uncleaved form is constitutively and abundantly expressed, and acts as a chromatin-associated nuclear factor with transcriptional repressor properties, it may sequester nuclear NF-kappaB/RELA, lowering expression of its targets. This form is rapidely lost upon angiogenic or pro-inflammatory activation. The sequence is that of Interleukin-33 (IL33) from Pongo abelii (Sumatran orangutan).